We begin with the raw amino-acid sequence, 480 residues long: PTS system sucrose-specific EIIBC component (480 aa).

The PTS EIIB type-1 domain maps to 4–87 (KKSAENILQA…EKITGKEASS (84 aa)). The Phosphocysteine intermediate; for EIIB activity role is filled by Cys26. 8 helical membrane-spanning segments follow: residues 109–129 (LSDI…LMGI), 158–178 (MINI…GFSA), 182–202 (FGGN…PELM), 264–284 (LLTP…FVGP), 303–323 (FGGA…VITG), 349–369 (PIAT…FFII), 405–425 (PFIG…FFKV), and 449–469 (LHYG…TYAL). The 361-residue stretch at 120 to 480 (IVAGGLLMGI…YRKKYRNIEA (361 aa)) folds into the PTS EIIC type-1 domain.

The protein localises to the cell membrane. The enzyme catalyses N(pros)-phospho-L-histidyl-[protein](out) + sucrose = sucrose 6(G)-phosphate(in) + L-histidyl-[protein]. Its function is as follows. The phosphoenolpyruvate-dependent sugar phosphotransferase system (sugar PTS), a major carbohydrate active transport system, catalyzes the phosphorylation of incoming sugar substrates concomitantly with their translocation across the cell membrane. This system is involved in sucrose transport. The protein is PTS system sucrose-specific EIIBC component of Staphylococcus xylosus.